The chain runs to 330 residues: Aspartate--ammonia ligase (330 aa).

It belongs to the class-II aminoacyl-tRNA synthetase family. AsnA subfamily.

The protein resides in the cytoplasm. The enzyme catalyses L-aspartate + NH4(+) + ATP = L-asparagine + AMP + diphosphate + H(+). It functions in the pathway amino-acid biosynthesis; L-asparagine biosynthesis; L-asparagine from L-aspartate (ammonia route): step 1/1. In Yersinia pseudotuberculosis serotype O:1b (strain IP 31758), this protein is Aspartate--ammonia ligase.